A 106-amino-acid chain; its full sequence is Protein translation factor SUI1 homolog (106 aa).

It belongs to the SUI1 family.

The chain is Protein translation factor SUI1 homolog from Methanopyrus kandleri (strain AV19 / DSM 6324 / JCM 9639 / NBRC 100938).